Consider the following 145-residue polypeptide: 3-hydroxyacyl-[acyl-carrier-protein] dehydratase FabZ (145 aa).

His51 is a catalytic residue.

This sequence belongs to the thioester dehydratase family. FabZ subfamily.

It is found in the cytoplasm. The catalysed reaction is a (3R)-hydroxyacyl-[ACP] = a (2E)-enoyl-[ACP] + H2O. In terms of biological role, involved in unsaturated fatty acids biosynthesis. Catalyzes the dehydration of short chain beta-hydroxyacyl-ACPs and long chain saturated and unsaturated beta-hydroxyacyl-ACPs. This chain is 3-hydroxyacyl-[acyl-carrier-protein] dehydratase FabZ, found in Staphylococcus epidermidis (strain ATCC 35984 / DSM 28319 / BCRC 17069 / CCUG 31568 / BM 3577 / RP62A).